A 46-amino-acid polypeptide reads, in one-letter code: MFMMNNNMFIMFMIMYNVMRVNITRCSRVMFTTFYMITNKYIYIFM.

It localises to the mitochondrion. This is an uncharacterized protein from Saccharomyces cerevisiae (strain ATCC 204508 / S288c) (Baker's yeast).